The chain runs to 564 residues: Urease subunit alpha (564 aa).

Residues 126-564 (GGIDTHIHFI…LPMAQRYFLF (439 aa)) enclose the Urease domain. 3 residues coordinate Ni(2+): histidine 131, histidine 133, and lysine 214. Position 214 is an N6-carboxylysine (lysine 214). Histidine 216 provides a ligand contact to substrate. Histidine 243 and histidine 269 together coordinate Ni(2+). The active-site Proton donor is the histidine 317. Aspartate 357 serves as a coordination point for Ni(2+).

This sequence belongs to the metallo-dependent hydrolases superfamily. Urease alpha subunit family. In terms of assembly, heterotrimer of UreA (gamma), UreB (beta) and UreC (alpha) subunits. Three heterotrimers associate to form the active enzyme. The cofactor is Ni cation. Carboxylation allows a single lysine to coordinate two nickel ions.

It localises to the cytoplasm. The enzyme catalyses urea + 2 H2O + H(+) = hydrogencarbonate + 2 NH4(+). Its pathway is nitrogen metabolism; urea degradation; CO(2) and NH(3) from urea (urease route): step 1/1. In Burkholderia pseudomallei (strain 1710b), this protein is Urease subunit alpha.